A 251-amino-acid polypeptide reads, in one-letter code: NLP effector protein Pc129485 (251 aa).

The first 19 residues, 1 to 19, serve as a signal peptide directing secretion; sequence MNFRIVLLVLVASLAGAQA. A Hepta-peptide GHRHDWE motif motif is present at residues 127-133; the sequence is GHRHNWE. N-linked (GlcNAc...) asparagine glycosylation is found at Asn-146 and Asn-218.

The protein belongs to the Necrosis inducing protein (NPP1) family.

The protein resides in the secreted. Secreted effector that contributes strongly to virulence during infection by P.capsici. The chain is NLP effector protein Pc129485 from Phytophthora capsici.